The sequence spans 309 residues: Cytochrome c biogenesis protein CcsA (309 aa).

The next 8 helical transmembrane spans lie at 18–38 (LGLL…GAFF), 43–63 (FFIV…QLLF), 67–87 (ISGH…TWGI), 102–122 (IIPS…CFVL), 148–168 (VMLS…VLFI), 216–236 (SILI…VWAN), 250–267 (TWAF…HMRI), and 279–299 (LATT…FLGI).

The protein belongs to the CcmF/CycK/Ccl1/NrfE/CcsA family. As to quaternary structure, may interact with ccs1.

The protein resides in the cellular thylakoid membrane. Functionally, required during biogenesis of c-type cytochromes (cytochrome c6 and cytochrome f) at the step of heme attachment. The protein is Cytochrome c biogenesis protein CcsA of Prochlorococcus marinus (strain MIT 9215).